Consider the following 474-residue polypeptide: Variant surface glycoprotein MITAT 1.5 (474 aa).

A signal peptide spans 1 to 22 (MIHSNKVATVVLALISSWPADG). 2 disulfides stabilise this stretch: C37/C161 and C144/C214. Residues N74 and N95 are each glycosylated (N-linked (GlcNAc...) asparagine). N329 carries N-linked (GlcNAc...) asparagine glycosylation. The tract at residues 388–449 (AKDGEGQKNQ…ETDEPDKEKC (62 aa)) is disordered. Composition is skewed to basic and acidic residues over residues 414–423 (TNKEACEKEN) and 435–449 (KGKDGETDEPDKEKC). N451 carries GPI-anchor amidated asparagine lipidation. A propeptide spans 452–474 (GSFLTSKQFAFSVVSAAFMALLF) (removed in mature form).

The protein localises to the cell membrane. In terms of biological role, VSG forms a coat on the surface of the parasite. The trypanosome evades the immune response of the host by expressing a series of antigenically distinct VSGs from an estimated 1000 VSG genes. The sequence is that of Variant surface glycoprotein MITAT 1.5 from Trypanosoma brucei brucei.